Reading from the N-terminus, the 121-residue chain is Ribosome-binding factor A (121 aa).

Belongs to the RbfA family. As to quaternary structure, monomer. Binds 30S ribosomal subunits, but not 50S ribosomal subunits or 70S ribosomes.

The protein resides in the cytoplasm. In terms of biological role, one of several proteins that assist in the late maturation steps of the functional core of the 30S ribosomal subunit. Associates with free 30S ribosomal subunits (but not with 30S subunits that are part of 70S ribosomes or polysomes). Required for efficient processing of 16S rRNA. May interact with the 5'-terminal helix region of 16S rRNA. This Paraburkholderia phytofirmans (strain DSM 17436 / LMG 22146 / PsJN) (Burkholderia phytofirmans) protein is Ribosome-binding factor A.